An 865-amino-acid chain; its full sequence is Ribosome biogenesis protein BOP1 homolog (865 aa).

2 disordered regions span residues 1-195 (MVAN…LKLG) and 207-240 (KTRG…EEDI). 3 stretches are compositionally biased toward acidic residues: residues 30–44 (LDES…ESDY), 57–79 (NEGE…DDVL), and 87–159 (DGEE…EEEA). Positions 160 to 180 (KENGKEKPAKAKAERKQREEQ) are enriched in basic and acidic residues. 7 WD repeats span residues 526-565 (GHTS…CIRT), 567-607 (PTGD…YMLV), 651-693 (THFR…SQVP), 696-734 (KSKG…MMKK), 737-776 (PGCK…KPYQ), 780-819 (IHNA…DLLQ), and 835-865 (VNDF…RLYT).

Belongs to the WD repeat BOP1/ERB1 family.

Its subcellular location is the nucleus. The protein localises to the nucleolus. The protein resides in the nucleoplasm. Its function is as follows. Required for maturation of ribosomal RNAs and formation of the large ribosomal subunit. This chain is Ribosome biogenesis protein BOP1 homolog, found in Anopheles gambiae (African malaria mosquito).